A 361-amino-acid chain; its full sequence is Phosphoserine aminotransferase (361 aa).

L-glutamate is bound by residues Ser-9 and Arg-42. Pyridoxal 5'-phosphate-binding positions include 76 to 77 (GR), Trp-102, Thr-153, Asp-173, and Gln-196. The residue at position 197 (Lys-197) is an N6-(pyridoxal phosphate)lysine. 238–239 (NT) provides a ligand contact to pyridoxal 5'-phosphate.

It belongs to the class-V pyridoxal-phosphate-dependent aminotransferase family. SerC subfamily. In terms of assembly, homodimer. Pyridoxal 5'-phosphate serves as cofactor.

It is found in the cytoplasm. The enzyme catalyses O-phospho-L-serine + 2-oxoglutarate = 3-phosphooxypyruvate + L-glutamate. It catalyses the reaction 4-(phosphooxy)-L-threonine + 2-oxoglutarate = (R)-3-hydroxy-2-oxo-4-phosphooxybutanoate + L-glutamate. The protein operates within amino-acid biosynthesis; L-serine biosynthesis; L-serine from 3-phospho-D-glycerate: step 2/3. Its pathway is cofactor biosynthesis; pyridoxine 5'-phosphate biosynthesis; pyridoxine 5'-phosphate from D-erythrose 4-phosphate: step 3/5. Catalyzes the reversible conversion of 3-phosphohydroxypyruvate to phosphoserine and of 3-hydroxy-2-oxo-4-phosphonooxybutanoate to phosphohydroxythreonine. This chain is Phosphoserine aminotransferase, found in Cronobacter sakazakii (strain ATCC BAA-894) (Enterobacter sakazakii).